A 155-amino-acid chain; its full sequence is uncharacterized protein (155 aa).

Residues 4 to 65 (IDEIDEIIVR…VVDTSFFGEF (62 aa)) enclose the HTH asnC-type domain. The segment at residues 23-42 (LTELGKKVGLTASAVKNRIE) is a DNA-binding region (H-T-H motif).

This is an uncharacterized protein from Pyrococcus abyssi (strain GE5 / Orsay).